The following is a 1221-amino-acid chain: Coatomer subunit alpha (1221 aa).

WD repeat units lie at residues 7 to 46 (TKAS…LLEK), 49 to 88 (EHEG…CLFT), 91 to 130 (GHKD…CIAE), 133 to 172 (GHNH…KKMT), 202 to 241 (GHDR…VDTF), 243 to 282 (GHYN…TVHM), 285 to 323 (RDHD…PLFV), 358 to 399 (PSNN…SNTV), and 528 to 567 (WDDN…TGVK). The interval 820–885 (GVEQSTSTPT…DDGGWERDDL (66 aa)) is disordered. Low complexity predominate over residues 844–857 (SQQQSSQQQQQQQQ). The stretch at 910 to 953 (PQPGPSFSMIWARNSQFAVDHIAAGSFESAMNILNSQIGAVNFD) is one WD 10 repeat.

Oligomeric complex that consists of at least the alpha, beta, beta', gamma, delta, epsilon and zeta subunits.

It is found in the cytoplasm. It localises to the golgi apparatus membrane. Its function is as follows. The coatomer is a cytosolic protein complex that binds to dilysine motifs and reversibly associates with Golgi non-clathrin-coated vesicles, which further mediate biosynthetic protein transport from the ER, via the Golgi up to the trans Golgi network. Coatomer complex is required for budding from Golgi membranes, and is essential for the retrograde Golgi-to-ER transport of dilysine-tagged proteins. The protein is Coatomer subunit alpha (copa) of Dictyostelium discoideum (Social amoeba).